A 312-amino-acid chain; its full sequence is Calcium-independent mitochondrial carrier protein SCaMC-3L (312 aa).

Solcar repeat units lie at residues 27-113 (GTLW…SRNF), 121-206 (PSFQ…LRCL), and 217-304 (PSGL…MKKT). The next 6 membrane-spanning stretches (helical) occupy residues 33-50 (LLSGAMAGAVSRTGTAPL), 88-107 (GNGINVLKIAPEYAIKFSVF), 131-144 (SLAVAISQTLINPM), 182-200 (YLPNMLGIIPYACTDLAVY), 219-243 (GLVSLSSVTLSTTCGQMASYPLTLV), and 279-298 (GMTPTLLKVLPAGGISYLVY).

The protein belongs to the mitochondrial carrier (TC 2.A.29) family. As to expression, mainly expressed in testis and at lesser levels in brain.

The protein resides in the mitochondrion inner membrane. It catalyses the reaction Mg(2+)(out) + phosphate(in) + ATP(out) = Mg(2+)(in) + phosphate(out) + ATP(in). It carries out the reaction ADP(out) + phosphate(in) + H(+)(out) = ADP(in) + phosphate(out) + H(+)(in). Its function is as follows. Calcium-independent ATP-Mg/Pi exchanger that catalyzes the electroneutral exchange of Mg-ATP or free ADP against an hydrogenphosphate and participates in the net transport of adenine nucleotides across the mitochondria inner membrane. This is Calcium-independent mitochondrial carrier protein SCaMC-3L from Rattus norvegicus (Rat).